The primary structure comprises 436 residues: Ribosome biogenesis protein WDR12 homolog (436 aa).

Residues 13–97 (VRVRFLTKLP…ERVLELEYVK (85 aa)) are ubiquitin-like (UBL) domain. 7 WD repeats span residues 109–147 (PHDDWVSAVDGSNPSFVLTGCYDGLARIWRDASECTHIL), 149–193 (GHSD…SVPK), 203–242 (GHTSSVQSVAVDPSTNMICSGSWDNSIKLWSVEGSEEDGD), 273–311 (GHTQCVSAVTWPERQTIYSASWDHSVRQWDVQTGKETWN), 313–353 (VSGK…TLAP), 359–399 (SHKS…PLAS), and 402–436 (SHKDKVLCADWWKGDSVISGGADSKLCIASGIEIV). Residues 240-262 (DGDTVSVKKRRTNSDSSGPEESL) are disordered.

This sequence belongs to the WD repeat WDR12/YTM1 family.

The protein resides in the nucleus. Its subcellular location is the nucleolus. It localises to the nucleoplasm. Required for maturation of ribosomal RNAs and formation of the large ribosomal subunit. This is Ribosome biogenesis protein WDR12 homolog from Oryza sativa subsp. japonica (Rice).